The primary structure comprises 461 residues: Ribulose bisphosphate carboxylase (461 aa).

Substrate is bound at residue Asn112. Catalysis depends on Lys167, which acts as the Proton acceptor. Lys169 is a binding site for substrate. 3 residues coordinate Mg(2+): Lys192, Asp194, and Glu195. Lys192 bears the N6-carboxylysine mark. Residue His288 is the Proton acceptor of the active site. Residues Arg289, His322, and Ser369 each coordinate substrate.

Belongs to the RuBisCO large chain family. Type II subfamily. As to quaternary structure, homodimer. Mg(2+) is required as a cofactor.

It carries out the reaction 2 (2R)-3-phosphoglycerate + 2 H(+) = D-ribulose 1,5-bisphosphate + CO2 + H2O. It catalyses the reaction D-ribulose 1,5-bisphosphate + O2 = 2-phosphoglycolate + (2R)-3-phosphoglycerate + 2 H(+). Functionally, ruBisCO catalyzes two reactions: the carboxylation of D-ribulose 1,5-bisphosphate, the primary event in carbon dioxide fixation, as well as the oxidative fragmentation of the pentose substrate. Both reactions occur simultaneously and in competition at the same active site. The chain is Ribulose bisphosphate carboxylase from Rhodopseudomonas palustris (strain BisB18).